The chain runs to 1638 residues: Chromatin-remodeling ATPase INO80 (1638 aa).

The disordered stretch occupies residues 41 to 93 (SLRKPLSSDEETDDEHVVKREHDVQDSDDSSTVGVVRMKQSSKRKSRLLASKE). Serine 47 and serine 48 each carry phosphoserine. Position 52 is a phosphothreonine (threonine 52). Residues 55–65 (EHVVKREHDVQ) show a composition bias toward basic and acidic residues. Phosphoserine occurs at positions 67 and 70. Residues 136-161 (VQQLLREHVREQRQRKNYYKKAANAQ) adopt a coiled-coil conformation. The interval 201–259 (RLAEAQAGPKPPKQRRRGRKKRDNMGSPESGEVPPSELGKYTFGDTLPNNEDDDEDGGE) is disordered. The span at 212–222 (PKQRRRGRKKR) shows a compositional bias: basic residues. Serine 227 and serine 230 each carry phosphoserine. The segment covering 250–259 (NEDDDEDGGE) has biased composition (acidic residues). A DBINO domain is found at 313–438 (IWQIMSKKES…AHFMSKKLGQ (126 aa)). The interval 499-528 (KEKEEEEQAQESVEDIKPEPRPEMKDLPQP) is disordered. Over residues 502–511 (EEEEQAQESV) the composition is skewed to acidic residues. The segment covering 512–526 (EDIKPEPRPEMKDLP) has biased composition (basic and acidic residues). The Helicase ATP-binding domain occupies 547-718 (ANIYDQGISG…WALLHFIMPT (172 aa)). 560-567 (DEMGLGKT) provides a ligand contact to ATP. A Helicase C-terminal domain is found at 1160–1315 (VLDNLLTRLK…GGNFKPDTLK (156 aa)). Disordered regions lie at residues 1335–1364 (QEAKLQSSSPIPAATQSERKRRHPQKDVNM) and 1463–1638 (FLDD…VGPE). The segment covering 1338–1350 (KLQSSSPIPAATQ) has biased composition (polar residues). Residues 1473–1495 (MRRRHHPRGTRRGRPRGSTRRGG) show a composition bias toward basic residues. 2 stretches are compositionally biased toward low complexity: residues 1505-1534 (TPTQAATPAVPATASQAAAAGTGAAAGTSS) and 1618-1627 (SPATSRAPSP).

It belongs to the SNF2/RAD54 helicase family. As to quaternary structure, component of the chromatin remodeling Ino80 complex.

The protein localises to the nucleus. The catalysed reaction is ATP + H2O = ADP + phosphate + H(+). Its function is as follows. ATPase component of the chromatin remodeling INO80 complex which is involved in transcriptional regulation, DNA replication and DNA repair. Binds DNA. As part of the INO80 complex, remodels chromatin by shifting nucleosomes. The polypeptide is Chromatin-remodeling ATPase INO80 (Drosophila melanogaster (Fruit fly)).